Consider the following 398-residue polypeptide: Fe-regulated protein 8 (398 aa).

Protein of unknown function; part of the gene cluster that mediates the biosynthesis of siderophore ferrichrome A which is contributing to organismal virulence. This is Fe-regulated protein 8 from Mycosarcoma maydis (Corn smut fungus).